A 446-amino-acid chain; its full sequence is MSSSLANRNIYTVSRLNSEVRLLLENEMGIVWLVGEISNFSAPVSGHWYLTLKDSQAQVKCAMFKGNNRLVNFKPQNGQQVLVKARLSLYEPRGDYQIILESMQPEGDGRLQQQFEQLKMQLAAEGLFAQTRKKPLPENPRCVGIITSRTGAALHDILHVLKRRDPNLPVVIYPTLVQGEEAAIQIAQAIGRANTRAECDVLIVGRGGGSLEDLWCFNHEIVARTIAASEIPIISAVGHEIDVTIADFVADVRAPTPSAAAELVSRDHRHKQQALHQWQAKLASTMRHYLAQQETQFARLQHKLDKQHPQARLERQQQQLDELSLRLEQKMQQRLATQQQRWDRLSHKIELHSPIHLIRQQRFNLIQQEQRINQSIQRYLIQSRHQLALLSEKLDAVSPLAALARGYSVTRTTQGELVRQSAQVKPGDTLVTQLMDGEILSTVNSR.

It belongs to the XseA family. As to quaternary structure, heterooligomer composed of large and small subunits.

Its subcellular location is the cytoplasm. It catalyses the reaction Exonucleolytic cleavage in either 5'- to 3'- or 3'- to 5'-direction to yield nucleoside 5'-phosphates.. Functionally, bidirectionally degrades single-stranded DNA into large acid-insoluble oligonucleotides, which are then degraded further into small acid-soluble oligonucleotides. The sequence is that of Exodeoxyribonuclease 7 large subunit from Vibrio cholerae serotype O1 (strain ATCC 39541 / Classical Ogawa 395 / O395).